We begin with the raw amino-acid sequence, 661 residues long: Transketolase (661 aa).

Residue histidine 30 coordinates substrate. Residues histidine 70 and 118 to 120 (GPL) each bind thiamine diphosphate. A disordered region spans residues 99 to 118 (STTPGHPEFRDTPGVEATTG). Mg(2+) is bound at residue aspartate 159. Residues glycine 160 and asparagine 189 each contribute to the thiamine diphosphate site. The Mg(2+) site is built by asparagine 189 and valine 191. The substrate site is built by histidine 266, arginine 357, and serine 384. Residue histidine 266 participates in thiamine diphosphate binding. The active-site Proton donor is glutamate 411. Residue phenylalanine 437 participates in thiamine diphosphate binding. The substrate site is built by histidine 461, aspartate 469, and arginine 520.

This sequence belongs to the transketolase family. In terms of assembly, homodimer. Mg(2+) serves as cofactor. Ca(2+) is required as a cofactor. It depends on Mn(2+) as a cofactor. The cofactor is Co(2+). Requires thiamine diphosphate as cofactor.

The enzyme catalyses D-sedoheptulose 7-phosphate + D-glyceraldehyde 3-phosphate = aldehydo-D-ribose 5-phosphate + D-xylulose 5-phosphate. In terms of biological role, catalyzes the transfer of a two-carbon ketol group from a ketose donor to an aldose acceptor, via a covalent intermediate with the cofactor thiamine pyrophosphate. The protein is Transketolase (tkt) of Physarum polycephalum (Slime mold).